Reading from the N-terminus, the 174-residue chain is NADH-ubiquinone oxidoreductase chain 6 (174 aa).

The next 4 helical transmembrane spans lie at 24–44 (LAMG…TGLM), 48–68 (FWFS…LFIY), 82–102 (MKLT…NILL), and 143–163 (LMTI…VKIT).

This sequence belongs to the complex I subunit 6 family.

The protein resides in the mitochondrion membrane. It catalyses the reaction a ubiquinone + NADH + 5 H(+)(in) = a ubiquinol + NAD(+) + 4 H(+)(out). Core subunit of the mitochondrial membrane respiratory chain NADH dehydrogenase (Complex I) that is believed to belong to the minimal assembly required for catalysis. Complex I functions in the transfer of electrons from NADH to the respiratory chain. The immediate electron acceptor for the enzyme is believed to be ubiquinone. The polypeptide is NADH-ubiquinone oxidoreductase chain 6 (ND6) (Ceratitis capitata (Mediterranean fruit fly)).